Here is a 194-residue protein sequence, read N- to C-terminus: A-type ATP synthase subunit E (194 aa).

Belongs to the V-ATPase E subunit family. As to quaternary structure, has multiple subunits with at least A(3), B(3), C, D, E, F, H, I and proteolipid K(x).

It localises to the cell membrane. In terms of biological role, component of the A-type ATP synthase that produces ATP from ADP in the presence of a proton gradient across the membrane. The chain is A-type ATP synthase subunit E from Saccharolobus islandicus (strain Y.N.15.51 / Yellowstone #2) (Sulfolobus islandicus).